The chain runs to 7096 residues: Replicase polyprotein 1ab (7096 aa).

The interval 1–147 is disordered; it reads MESLVPGFNE…ADLKSFDLGD (147 aa). Residues 1–2225 are Cytoplasmic-facing; the sequence is MESLVPGFNE…NYLKSPNFSK (2225 aa). The region spanning 12 to 127 is the CoV Nsp1 globular domain; sequence THVQLSLPVL…YRKVLLRKNG (116 aa). The 32-residue stretch at 148 to 179 folds into the BetaCoV Nsp1 C-terminal domain; that stretch reads ELGTDPYEDFQENWNTKHSSGVTRELMRELNG. A binding to 40s ribosome mRNA entry channel region spans residues 154 to 180; it reads YEDFQENWNTKHSSGVTRELMRELNGG. One can recognise a CoV Nsp2 N-terminal domain in the interval 183–456; sequence TRYVDNNFCG…NDNLLEILQK (274 aa). Zn(2+) contacts are provided by C200, C231, H234, H236, C323, C326, C341, C344, C370, C373, H382, and C416. The tract at residues 200–236 is C2H2; it reads CIKDLLARAGKASCTLSEQLDFIDTKRGVYCCREHEH. The C4 stretch occupies residues 323 to 344; the sequence is CDHCGETSWQTGDFVKATCEFC. Residues 370–416 form a C2HC region; the sequence is CPACHNSEVGPEHSLAEYHNESGLKTILRKGGRTIAFGGCVFSYVGC. One can recognise a CoV Nsp2 middle domain in the interval 458-688; that stretch reads KVNINIVGDF…FKLVNKFLAL (231 aa). LRR repeat units lie at residues 545–569 and 697–719; these read RSIF…AITI and GAKL…LYRK. The region spanning 690-818 is the CoV Nsp2 C-terminal domain; sequence ADSIIIGGAK…TNNTFTLKGG (129 aa). The region spanning 821-929 is the Ubiquitin-like 1 domain; that stretch reads TKVTFGDDTV…MYCSFYPPDE (109 aa). Residues 926 to 999 are disordered; that stretch reads PPDEDEEEGD…QQDGSEDNQT (74 aa). Composition is skewed to acidic residues over residues 927 to 942 and 971 to 984; these read PDED…EEFE and PEEE…DDDS. Macro domains are found at residues 1025 to 1194, 1231 to 1359, and 1367 to 1494; these read VNSF…LEMK, KIKA…LPSI, and ILGT…TSSS. The DPUP domain occupies 1496–1561; it reads TPEEHFIETI…TFDNLKTLLS (66 aa). The 56-residue stretch at 1565–1620 folds into the Ubiquitin-like 2 domain; the sequence is VRTIKVFTTVDNINLHTQVVDMSMTYGQQFGPTYLDGADVTKIKPHNSHEGKTFYV. Positions 1634–1898 constitute a Peptidase C16 domain; that stretch reads YYHTTDPSFL…CTEIDPKLDN (265 aa). C1674 acts as the For PL-PRO activity in catalysis. One copy of the LRR 3 repeat lies at 1680–1702; the sequence is LLTLQQIELKFNPPALQDAYYRA. C1752, C1755, C1787, and C1789 together coordinate Zn(2+). A C4-type zinc finger spans residues 1752-1789; it reads CKTCGQQQTTLKGVEAVMYMGTLSYEQFKKGVQIPCTC. Active-site for PL-PRO activity residues include H1835 and D1849. Residues 1911 to 2021 enclose the Nucleic acid-binding domain; that stretch reads PIDLVPNQPY…CLWSTKPVET (111 aa). A G2M domain is found at 2046–2155; it reads PVSEEVVENP…LNKVVSTTTN (110 aa). The helical transmembrane segment at 2226–2246 threads the bilayer; that stretch reads LINIIIWFLLLSVCLGSLIYS. Residues 2247-2317 are Lumenal-facing; the sequence is TAALGVLMSN…QITISSFKWD (71 aa). One can recognise a 3Ecto domain in the interval 2247 to 2317; the sequence is TAALGVLMSN…QITISSFKWD (71 aa). Disulfide bonds link C2263–C2291 and C2282–C2288. The chain crosses the membrane as a helical span at residues 2318–2338; that stretch reads LTAFGLVAEWFLAYILFTRFF. Residues 2339 to 2775 are Cytoplasmic-facing; that stretch reads YVLGLAAIMQ…VNNWLKQLIK (437 aa). Positions 2395-2485 are Y1; it reads KSYVHVVDGC…QFKRPINPTD (91 aa). One can recognise a CoV Nsp3 Y domain in the interval 2395–2763; that stretch reads KSYVHVVDGC…VTTKIALKGG (369 aa). Residues H2399, C2404, C2409, C2412, C2445, H2448, C2452, and C2455 each contribute to the Zn(2+) site. The segment at 2399-2412 is ZF1; the sequence is HVVDGCNSSTCMMC. Residues 2445–2455 form a ZF2 region; the sequence is CKLHNWNCVNC. Positions 2486–2580 are Y2; the sequence is QSSYIVDSVT…LLDQALVSDV (95 aa). Positions 2486 to 2763 are coV-Y; it reads QSSYIVDSVT…VTTKIALKGG (278 aa). Residues 2581 to 2662 form a Y3 region; the sequence is GDSAEVAVKM…ECLKLSHQSD (82 aa). Residues 2663 to 2763 form a Y4 region; the sequence is IEVTGDSCNN…VTTKIALKGG (101 aa). A helical transmembrane segment spans residues 2776–2796; sequence VTLVFLFVAAIFYLITPVHVM. Topologically, residues 2797–3044 are lumenal; sequence SKHTDFSSEI…IQPIGALDIS (248 aa). The helical transmembrane segment at 3045–3065 threads the bilayer; it reads ASIVAGGIVAIVVTCLAYYFM. Residues 3066–3099 are Cytoplasmic-facing; the sequence is RFRRAFGEYSHVVAFNTLLFLMSFTVLCLTPVYS. A helical transmembrane segment spans residues 3100-3120; that stretch reads FLPGVYSVIYLYLTFYLTNDV. Residues 3121–3127 lie on the Lumenal side of the membrane; sequence SFLAHIQ. The chain crosses the membrane as a helical span at residues 3128–3148; it reads WMVMFTPLVPFWITIAYIICI. At 3149–3586 the chain is on the cytoplasmic side; sequence STKHFYWFFS…KGTHHWLLLT (438 aa). Positions 3165–3263 constitute a Nsp4C domain; sequence VVFNGVSFST…QTSITSAVLQ (99 aa). The LRR 4 repeat unit spans residues 3185–3206; sequence LNKEMYLKLRSDVLLPLTQYNR. The Peptidase C30 domain maps to 3264 to 3569; it reads SGFRKMAFPS…VRQCSGVTFQ (306 aa). K3268 is covalently cross-linked (Glycyl lysine isopeptide (Lys-Gly) (interchain with G-Cter in ubiquitin)). Residue H3304 is the For 3CL-PRO activity of the active site. Residue K3353 forms a Glycyl lysine isopeptide (Lys-Gly) (interchain with G-Cter in ubiquitin) linkage. The Nucleophile; for 3CL-PRO activity role is filled by C3408. A helical membrane pass occupies residues 3587–3607; that stretch reads ILTSLLVLVQSTQWSLFFFLY. Position 3608 (E3608) is a topological domain, lumenal. The helical transmembrane segment at 3609–3629 threads the bilayer; it reads NAFLPFAMGIIAMSAFAMMFV. Residues 3630–3634 lie on the Cytoplasmic side of the membrane; the sequence is KHKHA. A helical transmembrane segment spans residues 3635–3655; it reads FLCLFLLPSLATVAYFNMVYM. Over 3656-3673 the chain is Lumenal; sequence PASWVMRIMTWLDMVDTS. Residues 3674–3694 traverse the membrane as a helical segment; the sequence is LSGFKLKDCVMYASAVVLLIL. At 3695–3729 the chain is on the cytoplasmic side; that stretch reads MTARTVYDDGARRVWTLMNVLTLVYKVYYGNALDQ. A helical membrane pass occupies residues 3730–3750; that stretch reads AISMWALIISVTSNYSGVVTT. Over 3751-3778 the chain is Lumenal; sequence VMFLARGIVFMCVEYCPIFFITGNTLQC. The helical transmembrane segment at 3779–3799 threads the bilayer; it reads IMLVYCFLGYFCTCYFGLFCL. Topologically, residues 3800-7096 are cytoplasmic; it reads LNRYFRLTLG…VISSDVLVNN (3297 aa). In terms of domain architecture, RdRp Nsp7 cofactor spans 3860 to 3942; that stretch reads SKMSDVKCTS…EMLDNRATLQ (83 aa). The interval 3931–4020 is disordered; the sequence is CEEMLDNRAT…QMYKQARSED (90 aa). 2 LRR repeats span residues 3935-3959 and 3977-4004; these read LDNR…AFAT and LKKL…LEKM. Positions 3943–4140 constitute a RdRp Nsp8 cofactor domain; that stretch reads AIASEFSSLP…LRANSAVKLQ (198 aa). In terms of domain architecture, Nsp9 ssRNA-binding spans 4141–4253; sequence NNELSPVALR…GSLAATVRLQ (113 aa). The 139-residue stretch at 4254-4392 folds into the ExoN/MTase coactivator domain; that stretch reads AGNATEVPAN…CDQLREPMLQ (139 aa). 8 residues coordinate Zn(2+): C4327, C4330, H4336, C4343, C4370, C4373, C4381, and C4383. The region spanning 4399 to 4653 is the NiRAN domain; the sequence is FLNRVCGVSA…TAESHVDTDL (255 aa). One copy of the LRR 7 repeat lies at 4591 to 4616; the sequence is AGIVGVLTLDNQDLNGNWYDFGDFIQ. N4601 and D4610 together coordinate Mn(2+). In terms of domain architecture, Nsp12 Interface spans 4658-4756; it reads IKWDLLKYDF…HNQDVNLHSS (99 aa). H4687, C4693, C4698, C4702, and C4879 together coordinate Zn(2+). Positions 4757–5324 constitute a Nsp12 RNA-dependent RNA polymerase domain; it reads RLSFKELLVY…AMYTPHTVLQ (568 aa). Residues 4759-4973 are rdRp Fingers N-ter; sequence SFKELLVYAA…HQKLLKSIAA (215 aa). Residues 4937-4947 form an interaction with RMP Remdesivir region; it reads KYAISAKNRAR. Residues 4974–5012 form a rdRp Palm N-ter region; that stretch reads TRGATVVIGTSKFYGGWHNMLKTVYSDVENPHLMGWDYP. In terms of domain architecture, RdRp catalytic spans 5004-5166; it reads PHLMGWDYPK…CFNSTYASQG (163 aa). A rdRp Fingers C-ter region spans residues 5013–5071; the sequence is KCDRAMPNMLRIMASLVLARKHTTCCSLSHRFYRLANECAQVLSEMVMCGGSLYVKPGG. H5034, C5037, and C5038 together coordinate Zn(2+). The interval 5072–5207 is rdRp Palm C-ter; that stretch reads TSSGDATTAY…TKGPHEFCSQ (136 aa). Active-site residues include S5151, D5152, and D5153. The tract at residues 5208–5324 is rdRp Thumb; that stretch reads HTMLVKQGDD…AMYTPHTVLQ (117 aa). Positions 5325–5437 constitute a CV ZBD domain; the sequence is AVGACVLCNS…TDFNAIATCD (113 aa). Zn(2+) is bound by residues C5329, C5332, C5340, C5343, C5350, C5353, H5357, H5363, C5374, C5379, C5396, and H5399. An LRR 8 repeat occupies 5552 to 5572; sequence TSHTVMPLSAPTLVPQEHYVR. One can recognise a (+)RNA virus helicase ATP-binding domain in the interval 5581 to 5762; the sequence is NISDEFSSNV…MKTIGPDMFL (182 aa). 5606-5613 serves as a coordination point for a ribonucleoside 5'-triphosphate; sequence GPPGTGKS. One can recognise a (+)RNA virus helicase C-terminal domain in the interval 5763–5932; the sequence is GTCRRCPAEI…TLQAENVTGL (170 aa). An ExoN domain is found at 5997 to 6212; it reads MFITREEAIR…RCLAVHECFV (216 aa). Active-site residues include D6015, E6017, and E6116. Residues D6015, E6017, and E6116 each coordinate Mg(2+). Zn(2+) contacts are provided by C6132, C6135, C6151, H6154, H6182, C6186, and H6189. Residues H6193 and D6198 contribute to the active site. Residues H6193 and D6198 each contribute to the Mg(2+) site. C6204 contacts Zn(2+). Positions 6221–6452 constitute an N7-MTase domain; that stretch reads YPIIGDELKI…NLWNTFTRLQ (232 aa). 6256-6262 lines the S-adenosyl-L-methionine pocket; it reads DIGNPKA. The gpppA-binding stretch occupies residues 6339–6353; the sequence is CDGGSLYVNKHAFHT. Positions 6377, 6402, 6409, and 6412 each coordinate Zn(2+). In terms of domain architecture, Nsp15 N-terminal oligomerization spans 6453-6513; that stretch reads SLENVAFNVV…NVAFELWAKR (61 aa). The region spanning 6514–6639 is the AV-Nsp11N/CoV-Nsp15M domain; it reads NIKPVPEVKI…YYKKVDGVVQ (126 aa). The NendoU domain maps to 6656-6795; it reads KPRSQMEIDF…KDGHVETFYP (140 aa). The Proton donor; for uridylate-specific endoribonuclease nsp15 activity role is filled by H6686. The Proton acceptor; for uridylate-specific endoribonuclease nsp15 activity role is filled by H6701. K6741 serves as the catalytic For uridylate-specific endoribonuclease nsp15 activity. Residues 6741 to 6745 and 6792 to 6796 each bind uracil; these read KCVCS and TFYPK. One can recognise a Nidovirus-type SAM-dependent 2'-O-MTase domain in the interval 6800–7094; the sequence is SQAWQPGVAM…RVVISSDVLV (295 aa). An LRR 9 repeat occupies 6817 to 6841; it reads RMLLEKCDLQNYGDSATLPKGIMMN. Residues K6844, D6928, K6968, and E7001 contribute to the active site.

It belongs to the coronaviruses polyprotein 1ab family. As to quaternary structure, interacts with host GIGYF2. May form homohexamers. Interacts with N protein. In terms of assembly, 3CL-PRO exists as monomer and homodimer. Only the homodimer shows catalytic activity. Interacts with host FBXO22; this interaction promotes the proteasomal degradation of nsp5. As to quaternary structure, interacts with PL-PRO and nsp6. Forms homodimers. Interacts with host ZFYVE1 (DFCP1), which leads to ER and DMVs binding to lipid droplets. Interacts with host TBK1; this interaction decreases IRF3 phosphorylation by 57%, which leads to reduced IFN-beta production. In terms of assembly, interacts with nsp8 and nsp12 to form the replication-transcription complex (RTC): nsp12, nsp7, two subunits of nsp8, and up to two subunits of nsp13. Eight copies of nsp7 and eight copies of nsp8 assemble to form a heterohexadecamer dsRNA-encircling ring structure. As to quaternary structure, interacts with nsp7, nsp13 and nsp12 to form the replication-transcription complex (RTC): nsp12, nsp7, two subunits of nsp8, and up to two subunits of nsp13. Eight copies of nsp7 and eight copies of nsp8 assemble to form a heterohexadecamer dsRNA-encircling ring structure. Is a dimer. Interacts with NSP12. Interacts with host SND1. In terms of assembly, forms a dodecamer and interacts with nsp14 and nsp16; these interactions enhance nsp14 and nsp16 enzymatic activities. As to quaternary structure, interacts with nsp7 and nsp8 to form the replication-transcription complex (RTC): nsp12, nsp7, two subunits of nsp8, and up to two subunits of nsp13. Interacts with nsp9. Interacts with nsp8 to form the replication-transcription complex (RTC): nsp12, nsp7, two subunits of nsp8, and up to two subunits of nsp13. Interacts with host TBK1; this interaction inhibits TBK1 phosphorylation and decreases by 75% IRF3 phosphorylation, which leads to reduced IFN-beta production. In terms of assembly, interacts (via N-terminus) with DDX1. Interacts with nsp10. As to quaternary structure, homohexamer. Interacts with nsp10. Mn(2+) is required as a cofactor. It depends on Mg(2+) as a cofactor. Post-translationally, specific enzymatic cleavages in vivo by its own proteases yield mature proteins. 3CL-PRO and PL-PRO proteinases are autocatalytically processed.

It localises to the host cytoplasm. Its subcellular location is the host endosome. It is found in the host endoplasmic reticulum membrane. The protein localises to the host Golgi apparatus. The protein resides in the host nucleus. It localises to the host perinuclear region. Its subcellular location is the host endoplasmic reticulum. It is found in the host endoplasmic reticulum-Golgi intermediate compartment. The enzyme catalyses RNA(n) + a ribonucleoside 5'-triphosphate = RNA(n+1) + diphosphate. It catalyses the reaction ATP + H2O = ADP + phosphate + H(+). The catalysed reaction is TSAVLQ-|-SGFRK-NH2 and SGVTFQ-|-GKFKK the two peptides corresponding to the two self-cleavage sites of the SARS 3C-like proteinase are the two most reactive peptide substrates. The enzyme exhibits a strong preference for substrates containing Gln at P1 position and Leu at P2 position.. It carries out the reaction Thiol-dependent hydrolysis of ester, thioester, amide, peptide and isopeptide bonds formed by the C-terminal Gly of ubiquitin (a 76-residue protein attached to proteins as an intracellular targeting signal).. The enzyme catalyses a 5'-end (N(7)-methyl 5'-triphosphoguanosine)-ribonucleoside in mRNA + S-adenosyl-L-methionine = a 5'-end (N(7)-methyl 5'-triphosphoguanosine)-(2'-O-methyl-ribonucleoside) in mRNA + S-adenosyl-L-homocysteine + H(+). It catalyses the reaction uridylyl-uridylyl-ribonucleotide-RNA = a 3'-end uridylyl-2',3'-cyclophospho-uridine-RNA + a 5'-end dephospho-ribonucleoside-RNA. The catalysed reaction is a 5'-end diphospho-ribonucleoside in mRNA + GTP + H(+) = a 5'-end (5'-triphosphoguanosine)-ribonucleoside in mRNA + diphosphate. It carries out the reaction a 5'-end (5'-triphosphoguanosine)-ribonucleoside in mRNA + S-adenosyl-L-methionine = a 5'-end (N(7)-methyl 5'-triphosphoguanosine)-ribonucleoside in mRNA + S-adenosyl-L-homocysteine. With respect to regulation, inhibited in vitro by GRL-0617. Inhibited ex vivo by K22. It may shift NSP6 zippering activity towards the nuclear envelope, thereby impairing formation of the NSP6-compartment necessary for viral transcription/replication. Its activity is regulated as follows. Inhibited by Remdesivir antiviral drug (GS-5734). With respect to regulation, inhibited by Remdesivir antiviral drug (GS-5734) through non-obligate RNA chain termination. Inhibited by pyridone-containing alpha-ketoamides compounds 13a and 13b. In turn, alpha-ketoamide 13b (tert-butyl (1-((S)-1-(((S)-4-(benzylamino)-3,4-dioxo-1-((S)-2-oxopyrrolidin-3-yl)butan-2-yl)amino)-3-cyclopropyl-1-oxopropan-2-yl)-2-oxo-1,2-dihydropyridin-3-yl)carbamate) inhibits SARS-CoV-2 replication in human lung cells. Inhibited ex vivo by michael acceptor inhibitor N3. Inhibited ex vivo by compound 11a and 11b. Functionally, multifunctional protein involved in the transcription and replication of viral RNAs. Contains the proteinases responsible for the cleavages of the polyprotein. Inhibits host translation by associating with the open head conformation of the 40S subunit. The C-terminus binds to and obstructs ribosomal mRNA entry tunnel. Thereby inhibits antiviral response triggered by innate immunity or interferons. The nsp1-40S ribosome complex further induces an endonucleolytic cleavage near the 5'UTR of host mRNAs, targeting them for degradation. This inhibits the integrated stress response (ISR) in the infected cell by preventing EIF2S1/eIF2-alpha phosphorylation upstream of stress granule formation and depletes host G3BP1. Viral mRNAs less susceptible to nsp1-mediated inhibition of translation, because of their 5'-end leader sequence. In terms of biological role, enhances mRNA repression of the 4EHP-GYF2 complex in the host, thereby inhibiting the antiviral response and facilitating SARS-CoV-2 replication. Possibly acts in cooperation with nsp1, which induces ribosome stalling on host mRNA, triggering mRNA repression by the host 4EHP-GYF2 complex which is enhanced by nsp2. Its function is as follows. Responsible for the cleavages located at the N-terminus of the replicase polyprotein. Participates together with nsp4 in the assembly of virally-induced cytoplasmic double-membrane vesicles necessary for viral replication. Antagonizes innate immune induction of type I interferon by blocking the phosphorylation, dimerization and subsequent nuclear translocation of host IRF3. Also prevents host NF-kappa-B signaling. In addition, PL-PRO possesses a deubiquitinating/deISGylating activity and processes both 'Lys-48'- and 'Lys-63'-linked polyubiquitin chains from cellular substrates. Cleaves preferentially ISG15 from antiviral protein IFIH1 (MDA5), but not RIGI. Can play a role in host ADP-ribosylation by ADP-ribose. Plays a role in the formation and maintenance of double membrane vesicles (DMVs) replication organelles. DMVs are formed by nsp3 and nsp4, while nsp6 zippers ER membranes and connects to lipid droplets. Functionally, plays a role in the formation and maintenance of double membrane vesicles (DMVs) replication organelles. DMVs are formed by nsp3 and nsp4, while nsp6 zippers ER membranes and connects to lipid droplets. Cleaves the C-terminus of replicase polyprotein at 11 sites. Recognizes substrates containing the core sequence [ILMVF]-Q-|-[SGACN]. Cleaves and inactivates human TRMT1, preventing tRNA guanine(26)-dimethylation of tRNAs. May cleave human NLRP1 in lung epithelial cells, thereby activating the NLRP1 inflammasome pathway. May cleave human GSDMD, triggering alternative GSDME-mediated epithelial cell death upon activation of the NLRP1 inflammasome, which may enhance the release interleukins 1B, 6, 16 and 18. Also able to bind an ADP-ribose-1''-phosphate (ADRP). In terms of biological role, plays a role in the formation and maintenance of double membrane vesicles (DMVs) replication organelles. DMVs are formed by nsp3 and nsp4, while nsp6 zippers ER membranes and connects to lipid droplets. LDs are consumed during DMV formation. Binds to host TBK1 without affecting TBK1 phosphorylation; the interaction with TBK1 decreases IRF3 phosphorylation, which leads to reduced IFN-beta production. Its function is as follows. Plays a role in viral RNA synthesis. Forms a hexadecamer with nsp8 (8 subunits of each) that may participate in viral replication by acting as a primase. Alternatively, may synthesize substantially longer products than oligonucleotide primers. Functionally, plays a role in viral RNA synthesis. Forms a hexadecamer with nsp7 (8 subunits of each) that may participate in viral replication by acting as a primase. Alternatively, may synthesize substantially longer products than oligonucleotide primers. Interacts with ribosome signal recognition particle RNA (SRP). Together with NSP9, suppress protein integration into the cell membrane, thereby disrupting host immune defenses. Forms a primer, NSP9-pU, which is utilized by the polymerase for the initiation of RNA chains. Interacts with ribosome signal recognition particle RNA (SRP). Together with NSP8, suppress protein integration into the cell membrane, thereby disrupting host immune defenses. In terms of biological role, plays a pivotal role in viral transcription by stimulating both nsp14 3'-5' exoribonuclease and nsp16 2'-O-methyltransferase activities. Therefore plays an essential role in viral mRNAs cap methylation. Its function is as follows. RNA-directed RNA polymerase that catalyzes the transcription of viral genomic and subgenomic RNAs. Acts in complex with nsp7 and nsp8 to transcribe both the minus and positive strands of genomic RNA. The kinase-like NiRAN domain of NSP12 attaches one or more nucleotides to the amino terminus of NSP9, forming a covalent RNA-protein intermediate that serves as transcription/replication primer. Subgenomic RNAs (sgRNAs) are formed by discontinuous transcription: The polymerase has the ability to pause at transcription-regulating sequences (TRS) and jump to the leader TRS, resulting in a major deletion. This creates a series of subgenomic RNAs that are replicated, transcribed and translated. In addition, Nsp12 is a subunit of the viral RNA capping enzyme that catalyzes the RNA guanylyltransferase reaction for genomic and sub-genomic RNAs. Subsequently, the NiRAN domain transfers RNA to GDP, and forms the core cap structure GpppA-RNA. Functionally, plays a role in viral RNA synthesis. Multi-functional protein with a zinc-binding domain in N-terminus displaying RNA and DNA duplex-unwinding activities with 5' to 3' polarity. Activity of helicase is dependent on magnesium. Binds to host TBK1 and inhibits TBK1 phosphorylation; the interaction with TBK1 decreases IRF3 phosphorylation, which leads to reduced IFN-beta production. Plays a role in viral RNA synthesis through two distinct activities. The N7-guanine methyltransferase activity plays a role in the formation of the cap structure GpppA-RNA. The proofreading exoribonuclease reduces the sensitivity of the virus to RNA mutagens during replication. This activity acts on both ssRNA and dsRNA in a 3'-5' direction. In terms of biological role, plays a role in viral transcription/replication and prevents the simultaneous activation of host cell dsRNA sensors, such as MDA5/IFIH1, OAS, and PKR. Acts by degrading the 5'-polyuridines generated during replication of the poly(A) region of viral genomic and subgenomic RNAs. Catalyzes a two-step reaction in which a 2'3'-cyclic phosphate (2'3'-cP) is first generated by 2'-O transesterification, which is then hydrolyzed to a 3'-phosphate (3'-P). If not degraded, poly(U) RNA would hybridize with poly(A) RNA tails and activate host dsRNA sensors. May bind genomic dsRNA in association with the replication-transcription complex (RTC), and play a role in nsp12 discontinous transcription. Its function is as follows. Methyltransferase that mediates mRNA cap 2'-O-ribose methylation to the 5'-cap structure of viral mRNAs. N7-methyl guanosine cap is a prerequisite for binding of nsp16. Therefore, it plays an essential role in cap methylation of viral mRNAs, which is essential to evade the immune system, especially when restricted by human IFIT1 and IFIT3. May disrupt host mRNA splicing in nucleus by interacting with pre-mRNA Recognition Domains of the U1 and U2 snRNAs. The chain is Replicase polyprotein 1ab (rep) from Homo sapiens (Human).